A 917-amino-acid chain; its full sequence is MLX-interacting protein (917 aa).

The disordered stretch occupies residues 1–72 (MAADVFMCSP…AGPGREEPPR (72 aa)). Ala2 carries the N-acetylalanine modification. Ser9, Ser33, and Ser39 each carry phosphoserine. A compositionally biased stretch (acidic residues) spans 27–37 (PEDDDDSDTDE). The span at 47-57 (ATSARAHASAA) shows a compositional bias: low complexity. Residues 73–327 (RQQIIHSGHF…PLQPNLDFMD (255 aa)) form a required for cytoplasmic localization region. The interval 322 to 445 (NLDFMDTFEP…LLSPGPAPAP (124 aa)) is transactivation domain. 2 disordered regions span residues 347 to 402 (LPPP…CERT) and 632 to 711 (SHST…TDPK). Residues 378–388 (LPNSLITSSAA) show a composition bias toward polar residues. Low complexity predominate over residues 632–643 (SHSTSSQPSPVS). Ser667 carries the post-translational modification Phosphoserine. Residues 670 to 685 (VPATGSSRDCPNSGQA) are compositionally biased toward polar residues. Residues 686 to 704 (SPCPSEQSPSPQSPQNNCS) show a composition bias toward low complexity. The bHLH domain maps to 717 to 767 (KNRQKHISAEQKRRFNIRMGFNTLNSLISNNSKQTSHAITLQKTMEYITKL). Residues 767 to 788 (LQQERMQMQEEARRLREEIEEL) are leucine-zipper. Residues 830–879 (WKFWIFSMIIKPLFESFKGMVSTSSLEEFHRTALSWLDQHCSLPVLRPMV) form a mediates heterotypic interactions between MLXIP and MLX and is required for cytoplasmic localization region. Positions 897-917 (SQLPEQASEAVTRMGKRSGES) are disordered.

As to quaternary structure, efficient DNA binding requires dimerization with another bHLH protein. Binds DNA as a homodimer or a heterodimer with MLX/TCFL4.

Its subcellular location is the cytoplasm. The protein resides in the nucleus. It localises to the mitochondrion outer membrane. Functionally, binds DNA as a heterodimer with MLX/TCFL4 and activates transcription. Binds to the canonical E box sequence 5'-CACGTG-3'. Plays a role in transcriptional activation of glycolytic target genes. Involved in glucose-responsive gene regulation. Regulates transcription in response to changes in cellular carbohydrate abundance such as occurs during fasting to feeding metabolic transition. Refeeding stimulates MLXIPL/ChREBP transcription factor, leading to increased BCKDK to PPM1K expression ratio, phosphorylation and activation of ACLY that ultimately results in the generation of malonyl-CoA and oxaloacetate immediate substrates of de novo lipogenesis and gluconeogenesis, respectively. The chain is MLX-interacting protein from Mus musculus (Mouse).